Reading from the N-terminus, the 217-residue chain is High frequency lysogenization protein HflD homolog (217 aa).

It belongs to the HflD family.

It is found in the cytoplasm. It localises to the cell membrane. The sequence is that of High frequency lysogenization protein HflD homolog from Buchnera aphidicola subsp. Baizongia pistaciae (strain Bp).